The chain runs to 180 residues: ATP synthase subunit delta (180 aa).

This sequence belongs to the ATPase delta chain family. As to quaternary structure, F-type ATPases have 2 components, F(1) - the catalytic core - and F(0) - the membrane proton channel. F(1) has five subunits: alpha(3), beta(3), gamma(1), delta(1), epsilon(1). F(0) has three main subunits: a(1), b(2) and c(10-14). The alpha and beta chains form an alternating ring which encloses part of the gamma chain. F(1) is attached to F(0) by a central stalk formed by the gamma and epsilon chains, while a peripheral stalk is formed by the delta and b chains.

Its subcellular location is the cell membrane. Its function is as follows. F(1)F(0) ATP synthase produces ATP from ADP in the presence of a proton or sodium gradient. F-type ATPases consist of two structural domains, F(1) containing the extramembraneous catalytic core and F(0) containing the membrane proton channel, linked together by a central stalk and a peripheral stalk. During catalysis, ATP synthesis in the catalytic domain of F(1) is coupled via a rotary mechanism of the central stalk subunits to proton translocation. This protein is part of the stalk that links CF(0) to CF(1). It either transmits conformational changes from CF(0) to CF(1) or is implicated in proton conduction. This is ATP synthase subunit delta from Dehalococcoides mccartyi (strain ATCC BAA-2100 / JCM 16839 / KCTC 5957 / BAV1).